The chain runs to 2376 residues: Protein Ycf2 (2376 aa).

Disordered stretches follow at residues 173 to 194, 226 to 256, and 952 to 1011; these read SSQLKGSSDQSRDHFDSIGTED, TEIESDRFSKGLSGSSSKSRLFTEGEKEMNN, and KRKK…KRKE. The segment covering 235 to 245 has biased composition (low complexity); the sequence is KGLSGSSSKSR. 2 stretches are compositionally biased toward basic and acidic residues: residues 246-255 and 960-1009; these read LFTEGEKEMN and KRKE…PEKR. Residue 1441–1448 participates in ATP binding; sequence GSIGSGRS. 3 disordered regions span residues 1515–1534, 1860–2046, and 2112–2230; these read YEDRDSDDYDEPGASDDYEP, LVGS…LRPK, and PAEE…DGFS. Positions 1866-2025 are enriched in acidic residues; sequence TEEEVEGTEE…GEGTEDEEGE (160 aa). Residues 2026–2038 show a composition bias toward basic and acidic residues; the sequence is GTEKDSSQFDNDR. 2 stretches are compositionally biased toward acidic residues: residues 2112–2129 and 2136–2213; these read PAEEIPEEEDPLPEEALE and GEEE…ENDS.

This sequence belongs to the Ycf2 family.

The protein localises to the plastid. It is found in the chloroplast stroma. Its function is as follows. Probable ATPase of unknown function. Its presence in a non-photosynthetic plant (Epifagus virginiana) and experiments in tobacco indicate that it has an essential function which is probably not related to photosynthesis. This Oenothera glazioviana (Large-flowered evening primrose) protein is Protein Ycf2.